A 639-amino-acid polypeptide reads, in one-letter code: Threonine--tRNA ligase (639 aa).

Residues 1 to 61 (MIRITLPDNS…DHDARLQIIT (61 aa)) form the TGS domain. The catalytic stretch occupies residues 242–533 (DHRRLGRELD…LIEQHAGALP (292 aa)). Zn(2+) contacts are provided by cysteine 333, histidine 384, and histidine 510.

This sequence belongs to the class-II aminoacyl-tRNA synthetase family. As to quaternary structure, homodimer. It depends on Zn(2+) as a cofactor.

The protein localises to the cytoplasm. The catalysed reaction is tRNA(Thr) + L-threonine + ATP = L-threonyl-tRNA(Thr) + AMP + diphosphate + H(+). In terms of biological role, catalyzes the attachment of threonine to tRNA(Thr) in a two-step reaction: L-threonine is first activated by ATP to form Thr-AMP and then transferred to the acceptor end of tRNA(Thr). Also edits incorrectly charged L-seryl-tRNA(Thr). The sequence is that of Threonine--tRNA ligase from Paracidovorax citrulli (strain AAC00-1) (Acidovorax citrulli).